A 296-amino-acid chain; its full sequence is Origin of replication complex subunit 6 (296 aa).

The segment at 212–296 (PSKRKHDDDS…MALEVSSAAN (85 aa)) is disordered. Residues 220–236 (DSDSSGESSGDDQDELD) show a composition bias toward acidic residues. A compositionally biased stretch (polar residues) spans 254-264 (WKSSVLSSNKQ).

This sequence belongs to the ORC6 family. As to quaternary structure, component of the origin recognition complex (ORC) composed of at least ORC1, ORC2, ORC3, ORC4, ORC5 and ORC6. ORC is regulated in a cell-cycle and development dependent manner. It is sequentially assembled at the exit from anaphase of mitosis and disassembled as cells enter S phase.

The protein localises to the nucleus. Functionally, component of the origin recognition complex (ORC) that binds origins of replication. DNA-binding is ATP-dependent. The specific DNA sequences that define origins of replication have not been identified yet. ORC is required to assemble the pre-replication complex necessary to initiate DNA replication. This Oryza sativa subsp. indica (Rice) protein is Origin of replication complex subunit 6.